The chain runs to 64 residues: Small ribosomal subunit protein bS21 (64 aa).

It belongs to the bacterial ribosomal protein bS21 family.

In Sulfurihydrogenibium sp. (strain YO3AOP1), this protein is Small ribosomal subunit protein bS21.